Consider the following 197-residue polypeptide: FMN-dependent NADH:quinone oxidoreductase (197 aa).

FMN contacts are provided by residues Ser-10 and 16–18 (SIS).

This sequence belongs to the azoreductase type 1 family. In terms of assembly, homodimer. The cofactor is FMN.

It carries out the reaction 2 a quinone + NADH + H(+) = 2 a 1,4-benzosemiquinone + NAD(+). It catalyses the reaction N,N-dimethyl-1,4-phenylenediamine + anthranilate + 2 NAD(+) = 2-(4-dimethylaminophenyl)diazenylbenzoate + 2 NADH + 2 H(+). In terms of biological role, quinone reductase that provides resistance to thiol-specific stress caused by electrophilic quinones. Functionally, also exhibits azoreductase activity. Catalyzes the reductive cleavage of the azo bond in aromatic azo compounds to the corresponding amines. This chain is FMN-dependent NADH:quinone oxidoreductase, found in Erythrobacter litoralis (strain HTCC2594).